We begin with the raw amino-acid sequence, 224 residues long: Thymidylate kinase (224 aa).

7–14 contributes to the ATP binding site; the sequence is GIEGSGKS.

It belongs to the thymidylate kinase family.

The catalysed reaction is dTMP + ATP = dTDP + ADP. Functionally, phosphorylation of dTMP to form dTDP in both de novo and salvage pathways of dTTP synthesis. This chain is Thymidylate kinase, found in Nitratidesulfovibrio vulgaris (strain DP4) (Desulfovibrio vulgaris).